Here is a 675-residue protein sequence, read N- to C-terminus: Cysteine-rich receptor-like protein kinase 25 (675 aa).

The N-terminal stretch at 1–25 (MSSCFKSSVSLFSVFLFMILKTVTS) is a signal peptide. Over 26–281 (DPTYLYHICP…IPSEKGKGKN (256 aa)) the chain is Extracellular. 2 consecutive Gnk2-homologous domains span residues 28 to 134 (TYLY…NQSI) and 140 to 247 (IRPG…LYPF). Asparagine 36, asparagine 43, asparagine 77, asparagine 106, asparagine 131, asparagine 151, asparagine 161, asparagine 188, asparagine 249, and asparagine 281 each carry an N-linked (GlcNAc...) asparagine glycan. A helical membrane pass occupies residues 282–302 (LTVIVTAIAVPVSVCVLLLGA). The Cytoplasmic segment spans residues 303 to 675 (MCWLLARRRN…DSSITIVYPR (373 aa)). Residues 347–622 (FSESNKLGHG…DILVMMNSFT (276 aa)) enclose the Protein kinase domain. ATP is bound by residues 353-361 (LGHGGFGEV) and lysine 375. The residue at position 420 (tyrosine 420) is a Phosphotyrosine. Aspartate 472 functions as the Proton acceptor in the catalytic mechanism. Serine 476 carries the post-translational modification Phosphoserine. Threonine 512 is subject to Phosphothreonine. Phosphotyrosine is present on tyrosine 520. The disordered stretch occupies residues 638-661 (MKDSRDPRSGGSASDHSATSKSLP). Polar residues predominate over residues 648–661 (GSASDHSATSKSLP).

Belongs to the protein kinase superfamily. Ser/Thr protein kinase family. CRK subfamily.

It localises to the membrane. It carries out the reaction L-seryl-[protein] + ATP = O-phospho-L-seryl-[protein] + ADP + H(+). The enzyme catalyses L-threonyl-[protein] + ATP = O-phospho-L-threonyl-[protein] + ADP + H(+). The sequence is that of Cysteine-rich receptor-like protein kinase 25 (CRK25) from Arabidopsis thaliana (Mouse-ear cress).